The sequence spans 328 residues: Aspartate carbamoyltransferase catalytic subunit (328 aa).

Residues Arg-64 and Thr-65 each coordinate carbamoyl phosphate. Lys-92 provides a ligand contact to L-aspartate. The carbamoyl phosphate site is built by Arg-114, His-144, and Gln-147. The L-aspartate site is built by Arg-177 and Arg-232. Gly-273 and Pro-274 together coordinate carbamoyl phosphate.

Belongs to the aspartate/ornithine carbamoyltransferase superfamily. ATCase family. Heterododecamer (2C3:3R2) of six catalytic PyrB chains organized as two trimers (C3), and six regulatory PyrI chains organized as three dimers (R2).

The catalysed reaction is carbamoyl phosphate + L-aspartate = N-carbamoyl-L-aspartate + phosphate + H(+). The protein operates within pyrimidine metabolism; UMP biosynthesis via de novo pathway; (S)-dihydroorotate from bicarbonate: step 2/3. In terms of biological role, catalyzes the condensation of carbamoyl phosphate and aspartate to form carbamoyl aspartate and inorganic phosphate, the committed step in the de novo pyrimidine nucleotide biosynthesis pathway. The sequence is that of Aspartate carbamoyltransferase catalytic subunit from Halorhodospira halophila (strain DSM 244 / SL1) (Ectothiorhodospira halophila (strain DSM 244 / SL1)).